We begin with the raw amino-acid sequence, 245 residues long: Heavy metal-associated isoprenylated plant protein 1 (245 aa).

The region spanning 28–92 (PVHVVLKIDF…KLQKKSKKKV (65 aa)) is the HMA 1 domain. Residues Cys-39 and Cys-42 each contribute to the a metal cation site. The interval 91–113 (KVELISPKPKKDTKENNEKKAND) is disordered. Residues 99-113 (PKKDTKENNEKKAND) are compositionally biased toward basic and acidic residues. The HMA 2 domain occupies 121 to 188 (VTTVVLKVNC…KLKKTVQVVP (68 aa)). Cys-132 and Cys-135 together coordinate a metal cation. The residue at position 242 (Cys-242) is a Cysteine methyl ester. Residue Cys-242 is the site of S-farnesyl cysteine attachment. Positions 243–245 (SVM) are cleaved as a propeptide — removed in mature form.

Belongs to the HIPP family.

Functionally, heavy-metal-binding protein. This is Heavy metal-associated isoprenylated plant protein 1 from Arabidopsis thaliana (Mouse-ear cress).